A 443-amino-acid chain; its full sequence is MAQFFKAKPNQAKKLSQKIALKVQRLDHLGAGIAEHQGKVVFIPGALPGETVEVQLTEQKKNYARAKLQRVSEASPDRQTPPCPWYGKCGGCDLQHLSLPRQLEYKRQALGDIVSRSAAQTVTVNTDEVSGDSWHYRRRARLATLLDKETNQLALGFREEGSKSVVGIDSCAVLARPLSELISPFATLLNRLKGKQRLGHLELTQAANGLFAVLRVTAPLAQSDKKLLSAFADERQIALLLQGNEGELEFLSSGHELPYYQLDGLKLAFAPGNFIQVNGEVNQAMVAQAMNWLDVHAGERVLDLFCGVGNFSLPLAKQGAEVVGVEGVPEMVAQAKQNAAINGLDNLSFYCADLSEDLAAEPWLGKIDKLLLDPARAGAYESLKWLKKMKPAKVLYVSCNPASLARDSVLLFEAGYQLTRLGLVDMFPQTHHSEGMALFELVN.

A TRAM domain is found at 12–70 (AKKLSQKIALKVQRLDHLGAGIAEHQGKVVFIPGALPGETVEVQLTEQKKNYARAKLQR). [4Fe-4S] cluster contacts are provided by Cys-83, Cys-89, Cys-92, and Cys-171. Residues Gln-276, Phe-305, Asn-310, Glu-326, Asp-353, and Asp-373 each coordinate S-adenosyl-L-methionine. Cys-399 serves as the catalytic Nucleophile.

It belongs to the class I-like SAM-binding methyltransferase superfamily. RNA M5U methyltransferase family. RlmD subfamily.

It catalyses the reaction uridine(1939) in 23S rRNA + S-adenosyl-L-methionine = 5-methyluridine(1939) in 23S rRNA + S-adenosyl-L-homocysteine + H(+). Catalyzes the formation of 5-methyl-uridine at position 1939 (m5U1939) in 23S rRNA. The chain is 23S rRNA (uracil(1939)-C(5))-methyltransferase RlmD from Shewanella amazonensis (strain ATCC BAA-1098 / SB2B).